Consider the following 132-residue polypeptide: Small ribosomal subunit protein uS8 (132 aa).

It belongs to the universal ribosomal protein uS8 family. Part of the 30S ribosomal subunit. Contacts proteins S5 and S12.

In terms of biological role, one of the primary rRNA binding proteins, it binds directly to 16S rRNA central domain where it helps coordinate assembly of the platform of the 30S subunit. This chain is Small ribosomal subunit protein uS8, found in Maricaulis maris (strain MCS10) (Caulobacter maris).